The primary structure comprises 158 residues: Peptide deformylase (158 aa).

The Fe cation site is built by C88 and H130. E131 is a catalytic residue. H134 is a binding site for Fe cation.

The protein belongs to the polypeptide deformylase family. The cofactor is Fe(2+).

It carries out the reaction N-terminal N-formyl-L-methionyl-[peptide] + H2O = N-terminal L-methionyl-[peptide] + formate. Its function is as follows. Removes the formyl group from the N-terminal Met of newly synthesized proteins. Requires at least a dipeptide for an efficient rate of reaction. N-terminal L-methionine is a prerequisite for activity but the enzyme has broad specificity at other positions. The chain is Peptide deformylase from Agathobacter rectalis (strain ATCC 33656 / DSM 3377 / JCM 17463 / KCTC 5835 / VPI 0990) (Eubacterium rectale).